The primary structure comprises 185 residues: Ribonuclease HII (185 aa).

The region spanning 1 to 185 (MIILGIDEAG…KSYKPIQLLL (185 aa)) is the RNase H type-2 domain. Residues Asp7, Glu8, and Asp99 each contribute to the a divalent metal cation site.

This sequence belongs to the RNase HII family. The cofactor is Mn(2+). Mg(2+) serves as cofactor.

Its subcellular location is the cytoplasm. It catalyses the reaction Endonucleolytic cleavage to 5'-phosphomonoester.. Endonuclease that specifically degrades the RNA of RNA-DNA hybrids. This chain is Ribonuclease HII, found in Francisella tularensis subsp. novicida (strain U112).